The chain runs to 371 residues: Carnitine monooxygenase oxygenase subunit (371 aa).

The Rieske domain occupies 44–152 (WICVAHGSEL…VEEYAGFVFI (109 aa)). [2Fe-2S] cluster-binding residues include cysteine 86, histidine 88, cysteine 106, and histidine 109. The Fe cation site is built by histidine 208, histidine 213, and aspartate 323.

The protein belongs to the bacterial ring-hydroxylating dioxygenase alpha subunit family. CntA subfamily. In terms of assembly, composed of an oxygenase subunit and a reductase subunit. The cofactor is [2Fe-2S] cluster. Fe cation serves as cofactor.

It catalyses the reaction (R)-carnitine + NADH + O2 + H(+) = (3R)-3-hydroxy-4-oxobutanoate + trimethylamine + NAD(+) + H2O. The catalysed reaction is (R)-carnitine + NADPH + O2 + H(+) = (3R)-3-hydroxy-4-oxobutanoate + trimethylamine + NADP(+) + H2O. Its pathway is amine and polyamine metabolism; carnitine metabolism. Its activity is regulated as follows. Inhibited by EDTA. In terms of biological role, converts carnitine to trimethylamine and malic semialdehyde. Acts on both enantiomers. The polypeptide is Carnitine monooxygenase oxygenase subunit (Acinetobacter pittii (strain PHEA-2)).